A 531-amino-acid polypeptide reads, in one-letter code: Acid-sensing ion channel 3 (531 aa).

Residues 1 to 43 lie on the Cytoplasmic side of the membrane; the sequence is MKPTSGPEEARRPASDIRVFASNCSMHGLGHVFGPGSLSLRRG. A helical transmembrane segment spans residues 44-61; that stretch reads MWAAAVVLSVATFLYQVA. At 62–441 the chain is on the extracellular side; it reads ERVRYYREFH…SELLGDIGGQ (380 aa). Cystine bridges form between C92–C186, C164–C171, C282–C370, C315–C366, C319–C364, C328–C350, and C330–C342. The N-linked (GlcNAc...) asparagine glycan is linked to N175. The disordered stretch occupies residues 285 to 307; sequence ASLNPNYEPEPSDPLGSPSPSPS. An N-linked (GlcNAc...) asparagine glycan is attached at N398. The helical transmembrane segment at 442-460 threads the bilayer; the sequence is MGLFIGASLLTILEILDYL. Residues 447–449 carry the GAS motif; ion selectivity filter motif; it reads GAS. Residues 461-531 lie on the Cytoplasmic side of the membrane; it reads CEVFRDKVLG…HRTCYLVTQL (71 aa). A PDZ-binding motif is present at residues 528–531; it reads VTQL.

The protein belongs to the amiloride-sensitive sodium channel (TC 1.A.6) family. ASIC3 subfamily. As to quaternary structure, can form homotrimeric channels. Heterotrimer; forms functional heterotrimers producing channel with different properties. Forms heterotrimers with ASIC2; gives rise to a biphasic current with a sustained current which discriminates poorly between Na(+) and K(+). Interacts with STOM; inhibits ASIC3 acid-evoked current. Interacts with LIN7B (via PDZ domain); increases ASIC3 expression at the plasma membrane. Interacts with MAGI1 (via PDZ domain); probably regulates ASIC3. Interacts with GOPC (via PDZ domain); probably regulates ASIC3. Interacts with DLG4 (via PDZ domain); reduces ASIC3 expression at the plasma membrane. In terms of tissue distribution, expressed by sensory neurons. Strongly expressed in brain, spinal cord, lung, lymph nodes, kidney, pituitary, heart and testis.

The protein resides in the cell membrane. It localises to the cytoplasm. It catalyses the reaction Na(+)(in) = Na(+)(out). It carries out the reaction K(+)(in) = K(+)(out). The enzyme catalyses Ca(2+)(in) = Ca(2+)(out). Inhibited by the diuretic drug amiloride. Inhibited by the diuretic drug triamterene. Potentiated by the vertebrate neuropeptide FF (NPFF) and the related FMRFamide. Specifically and reversibly inhibited by the a sea anemone toxin APETx2. Functionally, forms pH-gated heterotrimeric sodium channels that act as postsynaptic excitatory receptors in the nervous system. Upon extracellular acidification, these channels generate a biphasic current with a fast inactivating and a slow sustained phase. ASIC3 is more sensitive to protons and gates between closed, open, and desensitized states faster than other ASICs. Displays high selectivity for sodium ions but can also permit the permeation of other cations. As a neuronal acid sensor, probably contributes to mechanoreception, acid nociception, and heat nociception. By forming heterotrimeric channels with ASIC2, generates a biphasic current with a fast inactivating and a slow sustained phase, which in sensory neurons is proposed to mediate the pain induced by acidosis that occurs in ischemic, damaged or inflamed tissues. The chain is Acid-sensing ion channel 3 from Homo sapiens (Human).